Here is a 447-residue protein sequence, read N- to C-terminus: MMDMKENDQKRNDMMDMKSHDERKNLNSSQGKNEITFPKVLDPKKDNNGYKSYTLKAQKGKTEFYKGNFSNTLGYNGNLLGPTLKLKKGDKVKIKLVNNLDENTTFHWHGLEIDGKVDGGPSQVIKPGKEKTIKFEVKQEAATLWYHPHPSPNTAKQVYNGLSGLLYIEDDKKNNYPSNYGKNDLPIIIQDKTFVSKKLNYTKTKDEDGTQGDTVLVNGKVDPKLTTKEGKIRLRLLNGSNARDLNLKLSNNQSFEYIASEGGHLEKTKKLKEINLAPSARKEIVIDLSKMKEDKVNLVDNDETVILPIINKEKSTNKDTTPKVDKKIKLEGMDDNVTINGKKFDPNRIDFTQKVNRKETWEIENVKDKMSGMKHPFHIHGTQFKVLSVDGKKPSEDMRGKKDVISLEPGQKAKIEVVFKNTGTYMFHCHILEHEDNGMMGQIKVTK.

Basic and acidic residues predominate over residues Met-1–Asn-25. The segment at Met-1–Pro-43 is disordered. His-107, His-109, His-147, His-149, His-375, His-378, His-380, His-428, Cys-429, His-430, His-434, and Met-439 together coordinate Cu cation.

It belongs to the multicopper oxidase family. It depends on Cu cation as a cofactor.

The protein resides in the cytoplasm. In terms of biological role, may be involved in copper homeostasis and oxidative stress response. Oxidizes the substrate 3,3'-dimethoxybenzidine in vitro. Also possesses low levels of phenoloxidase and ferroxidase activities. The sequence is that of Multicopper oxidase mco (mco) from Staphylococcus aureus.